A 284-amino-acid polypeptide reads, in one-letter code: Pantothenate synthetase (284 aa).

30–37 contributes to the ATP binding site; the sequence is MGNLHEGH. The active-site Proton donor is His37. Gln61 provides a ligand contact to (R)-pantoate. Residue Gln61 participates in beta-alanine binding. Residue 149–152 coordinates ATP; the sequence is GEKD. Gln155 serves as a coordination point for (R)-pantoate. ATP contacts are provided by residues Val178 and 186–189; that span reads LSSR.

Belongs to the pantothenate synthetase family. As to quaternary structure, homodimer.

The protein localises to the cytoplasm. The enzyme catalyses (R)-pantoate + beta-alanine + ATP = (R)-pantothenate + AMP + diphosphate + H(+). Its pathway is cofactor biosynthesis; (R)-pantothenate biosynthesis; (R)-pantothenate from (R)-pantoate and beta-alanine: step 1/1. Catalyzes the condensation of pantoate with beta-alanine in an ATP-dependent reaction via a pantoyl-adenylate intermediate. This chain is Pantothenate synthetase, found in Sodalis glossinidius (strain morsitans).